The chain runs to 130 residues: MAPQSKRSGGRKQKKHVPNGVAHIQSTFNNTIVTISDASGDVVSWASAGSSGFKGAKKGTPFAAQTASESAARRAMDQGMRQIEVMVSGPGAGRETAIRALQGAGLEITLIRDVTPIPHNGCRPPKRRRV.

The disordered stretch occupies residues 1-21 (MAPQSKRSGGRKQKKHVPNGV). Basic residues predominate over residues 8–17 (SGGRKQKKHV).

It belongs to the universal ribosomal protein uS11 family. As to quaternary structure, part of the 30S ribosomal subunit. Interacts with proteins S7 and S18. Binds to IF-3.

Its function is as follows. Located on the platform of the 30S subunit, it bridges several disparate RNA helices of the 16S rRNA. Forms part of the Shine-Dalgarno cleft in the 70S ribosome. In Acaryochloris marina (strain MBIC 11017), this protein is Small ribosomal subunit protein uS11.